We begin with the raw amino-acid sequence, 173 residues long: Regulator of ribonuclease activity A (173 aa).

It belongs to the RraA family. Homotrimer. Binds to both RNA-binding sites in the C-terminal region of Rne and to RhlB.

The protein resides in the cytoplasm. Its function is as follows. Globally modulates RNA abundance by binding to RNase E (Rne) and regulating its endonucleolytic activity. Can modulate Rne action in a substrate-dependent manner by altering the composition of the degradosome. Modulates RNA-binding and helicase activities of the degradosome. This is Regulator of ribonuclease activity A from Vibrio vulnificus (strain YJ016).